The sequence spans 120 residues: MSAPPSGPAPDAQGGAPGQPTGPPGAPPNTTSNRRLQQTQAQVEEVVDIIRVNVDKVLERDQKLSELDDRADALQAGASQFESSAAKLKRKYWWKNCKMMIMLGGIGAIIVIVIIIYFFT.

The disordered stretch occupies residues 1-38 (MSAPPSGPAPDAQGGAPGQPTGPPGAPPNTTSNRRLQQ). The Cytoplasmic portion of the chain corresponds to 1 to 98 (MSAPPSGPAP…KRKYWWKNCK (98 aa)). Residues 29–38 (NTTSNRRLQQ) show a composition bias toward polar residues. The v-SNARE coiled-coil homology domain occupies 35–95 (RLQQTQAQVE…AKLKRKYWWK (61 aa)). A helical; Anchor for type IV membrane protein membrane pass occupies residues 99 to 118 (MMIMLGGIGAIIVIVIIIYF). Residues 119 to 120 (FT) lie on the Vesicular side of the membrane.

This sequence belongs to the synaptobrevin family. In terms of tissue distribution, nervous system specific.

It localises to the cytoplasmic vesicle. The protein resides in the secretory vesicle. Its subcellular location is the synaptic vesicle membrane. The protein localises to the synapse. It is found in the synaptosome. Its function is as follows. This protein may play a role in packaging, transport or release of neurotransmitters. The polypeptide is Synaptobrevin (Tetronarce californica (Pacific electric ray)).